The chain runs to 106 residues: Large ribosomal subunit protein uL24 (106 aa).

This sequence belongs to the universal ribosomal protein uL24 family. Part of the 50S ribosomal subunit.

One of two assembly initiator proteins, it binds directly to the 5'-end of the 23S rRNA, where it nucleates assembly of the 50S subunit. Functionally, one of the proteins that surrounds the polypeptide exit tunnel on the outside of the subunit. The protein is Large ribosomal subunit protein uL24 of Gluconobacter oxydans (strain 621H) (Gluconobacter suboxydans).